We begin with the raw amino-acid sequence, 649 residues long: Protein translocase subunit SecA 2 (649 aa).

Residues Gln105, 123-127 (GEGKT), and Asp535 each bind ATP.

It belongs to the SecA family. As to quaternary structure, monomer and homodimer. Part of the essential Sec protein translocation apparatus which comprises SecA, SecYEG and auxiliary proteins SecDF-YajC and YidC.

The protein localises to the cell inner membrane. It localises to the cytoplasm. It catalyses the reaction ATP + H2O + cellular proteinSide 1 = ADP + phosphate + cellular proteinSide 2.. In terms of biological role, part of the Sec protein translocase complex. Interacts with the SecYEG preprotein conducting channel. Has a central role in coupling the hydrolysis of ATP to the transfer of proteins into and across the cell membrane, serving both as a receptor for the preprotein-SecB complex and as an ATP-driven molecular motor driving the stepwise translocation of polypeptide chains across the membrane. This Magnetococcus marinus (strain ATCC BAA-1437 / JCM 17883 / MC-1) protein is Protein translocase subunit SecA 2.